The primary structure comprises 236 residues: Thrombin-like enzyme kangshuanmei (236 aa).

The Peptidase S1 domain occupies 1–227; it reads VIGGDECNIN…HLDWIQSIIA (227 aa). 6 cysteine pairs are disulfide-bonded: Cys-7–Cys-141, Cys-28–Cys-44, Cys-78–Cys-234, Cys-120–Cys-188, Cys-152–Cys-167, and Cys-178–Cys-203. Residue His-43 is the Charge relay system of the active site. Residue Asn-81 is glycosylated (N-linked (GlcNAc...) asparagine). Asp-88 acts as the Charge relay system in catalysis. 2 N-linked (GlcNAc...) asparagine glycosylation sites follow: Asn-99 and Asn-148. The Charge relay system role is filled by Ser-182. Residue Asn-229 is glycosylated (N-linked (GlcNAc...) asparagine).

This sequence belongs to the peptidase S1 family. Snake venom subfamily. In terms of assembly, monomer. In terms of processing, N-glycosylated by units composed of Fuc, Man, GlcNAc, Gal and NeuAC residues. In terms of tissue distribution, expressed by the venom gland.

It localises to the secreted. Inhibited by 4-(2-aminoethyl)-benzensulfonyl fluoride. Not inhibited by antithrombin-III. Its function is as follows. Thrombin-like snake venom serine protease. Cleaves bonds after Arg and Lys, converts fibrinogen (FGA and FGB) to fibrin and releases both fibrinopeptides A and B, and fibrinogen peptide Bbeta1-42. Has a blood clotting activity. The protein is Thrombin-like enzyme kangshuanmei of Gloydius brevicauda (Korean slamosa snake).